Here is a 166-residue protein sequence, read N- to C-terminus: Small ribosomal subunit protein uS5 (166 aa).

The S5 DRBM domain occupies 11–74; the sequence is LDDNVVAINR…EAAKKNLITV (64 aa).

The protein belongs to the universal ribosomal protein uS5 family. In terms of assembly, part of the 30S ribosomal subunit. Contacts proteins S4 and S8.

With S4 and S12 plays an important role in translational accuracy. Its function is as follows. Located at the back of the 30S subunit body where it stabilizes the conformation of the head with respect to the body. The protein is Small ribosomal subunit protein uS5 of Lactiplantibacillus plantarum (strain ATCC BAA-793 / NCIMB 8826 / WCFS1) (Lactobacillus plantarum).